Here is a 607-residue protein sequence, read N- to C-terminus: V-type proton ATPase catalytic subunit A (607 aa).

Residue 251–258 (GAFGCGKT) participates in ATP binding.

This sequence belongs to the ATPase alpha/beta chains family. V-ATPase is a heteromultimeric enzyme composed of a peripheral catalytic V1 complex (components A to H) attached to an integral membrane V0 proton pore complex (components: a, c, c', c'', d, e, f and VOA1).

It is found in the vacuole membrane. It carries out the reaction ATP + H2O + 4 H(+)(in) = ADP + phosphate + 5 H(+)(out). Its function is as follows. Catalytic subunit of the V1 complex of vacuolar(H+)-ATPase (V-ATPase), a multisubunit enzyme composed of a peripheral complex (V1) that hydrolyzes ATP and a membrane integral complex (V0) that translocates protons. V-ATPase is responsible for acidifying and maintaining the pH of intracellular compartments. This chain is V-type proton ATPase catalytic subunit A (VMA1), found in Encephalitozoon cuniculi (strain GB-M1) (Microsporidian parasite).